Consider the following 383-residue polypeptide: Cathepsin D (383 aa).

The N-terminal stretch at Met-1 to Ala-18 is a signal peptide. Residues Leu-19–Asn-48 constitute a propeptide that is removed on maturation. The 316-residue stretch at Tyr-63 to Ala-378 folds into the Peptidase A1 domain. The active site involves Asp-81. An intrachain disulfide couples Cys-94 to Cys-101. 2 N-linked (GlcNAc...) asparagine glycosylation sites follow: Asn-118 and Asn-238. Cys-259 and Cys-263 are oxidised to a cystine. The active site involves Asp-268. Cys-302 and Cys-339 form a disulfide bridge. N-linked (GlcNAc...) asparagine glycosylation occurs at Asn-310.

It belongs to the peptidase A1 family. In terms of assembly, monomer. Post-translationally, N-glycosylated on 2 out of the 3 potential sites. Glycans contain sulfated Mannose.

Its subcellular location is the lysosome. It localises to the secreted. It catalyses the reaction Specificity similar to, but narrower than, that of pepsin A. Does not cleave the 4-Gln-|-His-5 bond in B chain of insulin.. In terms of biological role, protease that may act during cell growth and/or development. The polypeptide is Cathepsin D (ctsD) (Dictyostelium discoideum (Social amoeba)).